A 476-amino-acid polypeptide reads, in one-letter code: Calcitonin gene-related peptide type 1 receptor (476 aa).

The N-terminal stretch at 1 to 33 (METLQMGLLSRSALFKYIIIFLIMINTRGYVLA) is a signal peptide. The Extracellular segment spans residues 34-154 (SQEQEAKTSV…FTHEKVKTAL (121 aa)). 3 cysteine pairs are disulfide-bonded: C63–C89, C80–C120, and C103–C142. N-linked (GlcNAc...) asparagine glycans are attached at residues N81, N133, and N138. Residues 155-179 (NLYYLTIIGHGLSIASLLISLGIFF) traverse the membrane as a helical segment. The Cytoplasmic portion of the chain corresponds to 180–190 (YFKNLSCQRIT). The helical transmembrane segment at 191 to 213 (LHKNLFFSFVCNSIITIISLSAV) threads the bilayer. The Extracellular portion of the chain corresponds to 214–224 (ANNQALVATNP). Residues 225–253 (VICKISQFIHLYLMGCNYFWMLCEGIYLH) traverse the membrane as a helical segment. Residues 254 to 267 (TLIVVAVFAEKQHL) lie on the Cytoplasmic side of the membrane. A helical transmembrane segment spans residues 268 to 288 (MWYYLLGWGFPLIPACIHAVA). Topologically, residues 289–304 (RSLYYNDNCWISSETH) are extracellular. A helical membrane pass occupies residues 305–329 (LLYIIHGPICAALLVNLFFLLNIVR). Over 330–344 (VLITKLKVTHQAESN) the chain is Cytoplasmic. The helical transmembrane segment at 345–366 (LYMKAVRATLILVPLLGIEFVL) threads the bilayer. Over 367–381 (FPWKPEGRIAEEIYD) the chain is Extracellular. Residues 382–402 (YVMHILMHYQGLLVATIFCFF) traverse the membrane as a helical segment. Residues 403 to 476 (NGEVQAVLKR…VFFKTEKQYM (74 aa)) are Cytoplasmic-facing.

It belongs to the G-protein coupled receptor 2 family.

Its subcellular location is the cell membrane. In terms of biological role, may function as G protein-coupled receptor for calcitonin-gene-related peptides and adrenomedullin. Specificity may be modulated by accessory proteins. May activate cAMP-dependent pathway. This chain is Calcitonin gene-related peptide type 1 receptor (calcrl), found in Xenopus laevis (African clawed frog).